The primary structure comprises 400 residues: LIM/homeobox protein Lhx3 (400 aa).

LIM zinc-binding domains follow at residues 34-84 (CAGC…CKDD) and 93-147 (CAAC…CKAD). S74 carries the post-translational modification Phosphoserine. Positions 160–219 (AKRPRTTITAKQLETLKSAYNTSPKPARHVREQLSSETGLDMRVVQVWFQNRRAKEKRLK) form a DNA-binding region, homeobox. 2 disordered regions span residues 215-280 (EKRL…SSLG) and 297-400 (TLDH…HAQF). Position 230 is a phosphotyrosine (Y230). Residues S237 and S241 each carry the phosphoserine modification. 2 stretches are compositionally biased toward pro residues: residues 319 to 334 (GIPPSPAAPQSLPGPQ) and 352 to 361 (SGPPGGPPPM). The segment covering 368-380 (GPSSDLSTESSSG) has biased composition (polar residues).

Interacts with POU1F1. At neuronal promoters, interacts with LDB1, in motor neurons LDB1 is displaced by ISL1 and a ternary complex is formed in which ISL1 contacts both LHX3 and LDB1; allosteric structural changes in the DNA binding domain of LHX3, induced by the ISL1-LHX3 interaction, may explain differences in sequence specificity of the different complexes. Interacts with LDB2. May interact with CITED2/MRG1. As to expression, mostly expressed in the pituitary anterior and intermediate lobes. It is also expressed in the pineal gland and transiently in the primordia of motor neurons including the spinal cord, pons and medulla oblongata.

Its subcellular location is the nucleus. Its function is as follows. Transcription factor. Recognizes and binds to the consensus sequence motif 5'-AATTAATTA-3' in the regulatory elements of target genes, such as glycoprotein hormones alpha chain CGA and visual system homeobox CHX10, positively modulating transcription; transcription can be co-activated by LDB2. Synergistically enhances transcription from the prolactin promoter in cooperation with POU1F1/Pit-1. Required for the establishment of the specialized cells of the pituitary gland and the nervous system. Involved in the development of interneurons and motor neurons in cooperation with LDB1 and ISL1. This Mus musculus (Mouse) protein is LIM/homeobox protein Lhx3 (Lhx3).